A 28-amino-acid polypeptide reads, in one-letter code: Dermaseptin-2 (28 aa).

Residue Gln-28 is modified to Glutamine amide.

It belongs to the frog skin active peptide (FSAP) family. Dermaseptin subfamily. Expressed by the skin glands.

The protein resides in the secreted. Its function is as follows. Antimicrobial peptide with activity against the Gram-positive bacterium S.aureus, and the Gram-negative bacteria E.coli and P.aeruginosa. Probably acts by disturbing membrane functions with its amphipathic structure. Has an activity of stimulation of insulin release, which may protect the species from being eaten by predators by causing fatal hypoglycemia. Has hemolytic activity (60% hemolysis at 128 ug/ml). This Phyllomedusa tarsius (Brownbelly leaf frog) protein is Dermaseptin-2.